The following is a 558-amino-acid chain: Thermosome subunit alpha (558 aa).

The tract at residues 536–558 (TEKGKKEGGEGAGAETPGAPSLE) is disordered. Residues 548–558 (GAETPGAPSLE) show a composition bias toward low complexity.

Belongs to the TCP-1 chaperonin family. Forms a Heterooligomeric complex of two stacked eight-membered rings.

Functionally, molecular chaperone; binds unfolded polypeptides in vitro, and has a weak ATPase activity. The chain is Thermosome subunit alpha (thsA) from Sulfolobus acidocaldarius (strain ATCC 33909 / DSM 639 / JCM 8929 / NBRC 15157 / NCIMB 11770).